The primary structure comprises 649 residues: V-type ATP synthase subunit I (649 aa).

The next 7 membrane-spanning stretches (helical) occupy residues 312–332, 360–380, 455–475, 485–505, 520–540, 556–576, and 593–613; these read FLSFFVFFSMIINDAGYGLIF, FMILGGGCVCWGGATTSFFGV, DNILMEIALLVGVVHLSLGML, IGWVVFMCGAYMYLPIYLQAV, GQVGYYVTFIGLGIAVLGGII, VFSDVLSYLRLYALSLAGAMV, and VLIIIFGHTVNIALSIMGGVI.

The protein belongs to the V-ATPase 116 kDa subunit family.

The protein resides in the cell membrane. Produces ATP from ADP in the presence of a proton gradient across the membrane. The chain is V-type ATP synthase subunit I (atpI) from Chlamydia muridarum (strain MoPn / Nigg).